Consider the following 79-residue polypeptide: Defensin-like protein 3 (79 aa).

Residues 1–29 form the signal peptide; the sequence is MAKFASIITLLFAALVVFAAFEAPTMVEA. 4 disulfide bridges follow: Cys-32-Cys-79, Cys-43-Cys-64, Cys-49-Cys-73, and Cys-53-Cys-75.

The protein belongs to the DEFL family.

The protein localises to the secreted. Its function is as follows. Possesses antifungal activity sensitive to inorganic cations. The sequence is that of Defensin-like protein 3 (AFP3) from Brassica napus (Rape).